Consider the following 211-residue polypeptide: MTSAFNWSALAFILAAIGLVIFMLVVPRLLGGRSQGTEKEEVFESGVVGAGNARIRLSAKFYLVAIFFVIFDLEALYLYAYSVSVREVGWIGYATALIFVVDLLIGLIYALSLGALNWAPADKRRKKERLSAAPAGFNLASITKFNGIDELHTDPTGKVPAQSSGQVNVSNDIEANKRHLANIDRINVTGNVTSVDFSTQSTNSLSNKSSS.

Helical transmembrane passes span 7–27 (WSAL…LVVP), 61–81 (FYLV…LYAY), and 88–108 (VGWI…IGLI).

It belongs to the complex I subunit 3 family. As to quaternary structure, NDH-1 is composed of 14 different subunits. Subunits NuoA, H, J, K, L, M, N constitute the membrane sector of the complex.

It is found in the cell inner membrane. The enzyme catalyses a quinone + NADH + 5 H(+)(in) = a quinol + NAD(+) + 4 H(+)(out). Functionally, NDH-1 shuttles electrons from NADH, via FMN and iron-sulfur (Fe-S) centers, to quinones in the respiratory chain. The immediate electron acceptor for the enzyme in this species is believed to be ubiquinone. Couples the redox reaction to proton translocation (for every two electrons transferred, four hydrogen ions are translocated across the cytoplasmic membrane), and thus conserves the redox energy in a proton gradient. This is NADH-quinone oxidoreductase subunit A from Psychrobacter sp. (strain PRwf-1).